A 372-amino-acid chain; its full sequence is L-selectin (372 aa).

A signal peptide spans 1–28; the sequence is MIFPRKCQSTQRDLWNIFKLWGWTMLCC. A propeptide spanning residues 29–38 is cleaved from the precursor; that stretch reads DFLAHHGTDC. Residues 39-332 lie on the Extracellular side of the membrane; sequence WTYHYSENPM…FSMIKEGDYN (294 aa). The region spanning 55-155 is the C-type lectin domain; that stretch reads RFCRENYTDL…ACHKPKAALC (101 aa). 10 disulfides stabilise this stretch: cysteine 57/cysteine 155, cysteine 128/cysteine 147, cysteine 128/cysteine 160, cysteine 160/cysteine 171, cysteine 165/cysteine 180, cysteine 182/cysteine 191, cysteine 197/cysteine 241, cysteine 227/cysteine 254, cysteine 259/cysteine 303, and cysteine 289/cysteine 316. N-linked (GlcNAc...) asparagine glycosylation is found at asparagine 60 and asparagine 104. Ca(2+)-binding residues include glutamate 118, asparagine 120, glutamate 126, asparagine 143, and aspartate 144. Residues 156–192 enclose the EGF-like domain; sequence YTASCQPWSCSGHGECVEIINNYTCNCDVGYYGPQCQ. Residue asparagine 177 is glycosylated (N-linked (GlcNAc...) asparagine). 2 consecutive Sushi domains span residues 195-256 and 257-318; these read IQCE…TCQV and IQCE…ICQK. Asparagine 226, asparagine 232, asparagine 246, and asparagine 271 each carry an N-linked (GlcNAc...) asparagine glycan. A helical membrane pass occupies residues 333–355; sequence PLFIPVAVMVTAFSGLAFIIWLA. Residues 356–372 lie on the Cytoplasmic side of the membrane; it reads RRLKKGKKSKKSMDDPY.

Belongs to the selectin/LECAM family. In terms of assembly, interaction with SELPLG/PSGL1 and PODXL2 is required for promoting recruitment and rolling of leukocytes. This interaction is dependent on the sialyl Lewis X glycan modification of SELPLG and PODXL2, and tyrosine sulfation modifications of SELPLG. Sulfation on 'Tyr-51' of SELPLG is important for L-selectin binding. Post-translationally, N-glycosylated.

The protein resides in the cell membrane. Calcium-dependent lectin that mediates cell adhesion by binding to glycoproteins on neighboring cells. Mediates the adherence of lymphocytes to endothelial cells of high endothelial venules in peripheral lymph nodes. Promotes initial tethering and rolling of leukocytes in endothelia. The polypeptide is L-selectin (SELL) (Macaca mulatta (Rhesus macaque)).